A 216-amino-acid chain; its full sequence is Somatotropin (216 aa).

A signal peptide spans 1-26 (MAAGPRTSVLLAFALLCLPWTQEVGA). Zn(2+) is bound at residue H45. C78 and C189 are oxidised to a cystine. S131 bears the Phosphoserine mark. E198 contributes to the Zn(2+) binding site. A disulfide bridge connects residues C206 and C214.

Belongs to the somatotropin/prolactin family.

The protein localises to the secreted. In terms of biological role, plays an important role in growth control. Its major role in stimulating body growth is to stimulate the liver and other tissues to secrete IGF1. It stimulates both the differentiation and proliferation of myoblasts. It also stimulates amino acid uptake and protein synthesis in muscle and other tissues. The polypeptide is Somatotropin (GH1) (Hippopotamus amphibius (Hippopotamus)).